A 90-amino-acid chain; its full sequence is Probable Fe(2+)-trafficking protein (90 aa).

Belongs to the Fe(2+)-trafficking protein family.

Functionally, could be a mediator in iron transactions between iron acquisition and iron-requiring processes, such as synthesis and/or repair of Fe-S clusters in biosynthetic enzymes. The chain is Probable Fe(2+)-trafficking protein from Nitrosospira multiformis (strain ATCC 25196 / NCIMB 11849 / C 71).